Reading from the N-terminus, the 78-residue chain is Large ribosomal subunit protein bL28 (78 aa).

Belongs to the bacterial ribosomal protein bL28 family.

The chain is Large ribosomal subunit protein bL28 from Haemophilus influenzae (strain 86-028NP).